Consider the following 379-residue polypeptide: MFSNRLPPPKHSQGRVSTALSSDRVEPAILTDQIAKNVKLDDFIPKRQSNFELSVPLPTKAEIQECTARTKSYIQRLVNAKLANSNNRASSRYVTETHQAPANLLLNNSHHIEVVSKQMDPLLPRFVGKKARKVVAPTENDEVVPVLHMDGSNDRGEADPNEWKIPAAVSNWKNPNGYTVALERRVGKALDNENNTINDGFMKLSEALENADKKARQEIRSKMELKRLAMEQEMLAKESKLKELSQRARYHNGTPQTGAIVKPKKQTSTVARLKELAYSQGRDVSEKIILGAAKRSEQPDLQYDSRFFTRGANASAKRHEDQVYDNPLFVQQDIESIYKTNYEKLDEAVNVKSEGASGSHGPIQFTKAESDDKSDNYGA.

Residues 1–10 are compositionally biased toward pro residues; the sequence is MFSNRLPPPK. Disordered stretches follow at residues 1-22 and 353-379; these read MFSN…ALSS and SEGA…NYGA. Over residues 368–379 the composition is skewed to basic and acidic residues; that stretch reads AESDDKSDNYGA.

Belongs to the SNW family. As to quaternary structure, belongs to the CWC complex (or CEF1-associated complex), a spliceosome sub-complex reminiscent of a late-stage spliceosome composed of the U2, U5 and U6 snRNAs and at least BUD13, BUD31, BRR2, CDC40, CEF1, CLF1, CUS1, CWC2, CWC15, CWC21, CWC22, CWC23, CWC24, CWC25, CWC27, ECM2, HSH155, IST3, ISY1, LEA1, MSL1, NTC20, PRP8, PRP9, PRP11, PRP19, PRP21, PRP22, PRP45, PRP46, SLU7, SMB1, SMD1, SMD2, SMD3, SMX2, SMX3, SNT309, SNU114, SPP2, SYF1, SYF2, RSE1 and YJU2. Interacts with CLF1, PRP22 and PRP46. Interacts with SPP382.

The protein localises to the nucleus. Functionally, involved in pre-mRNA splicing. Associated with the spliceosome throughout the splicing reactions, until after the second catalytic step. This chain is Pre-mRNA-processing protein 45 (PRP45), found in Saccharomyces cerevisiae (strain ATCC 204508 / S288c) (Baker's yeast).